The following is a 279-amino-acid chain: 3-methyl-2-oxobutanoate hydroxymethyltransferase (279 aa).

Mg(2+)-binding residues include D43 and D82. 3-methyl-2-oxobutanoate is bound by residues 43–44 (DS), D82, and K112. Residue E114 participates in Mg(2+) binding. E181 serves as the catalytic Proton acceptor.

Belongs to the PanB family. Homodecamer; pentamer of dimers. Mg(2+) is required as a cofactor.

The protein localises to the cytoplasm. The catalysed reaction is 3-methyl-2-oxobutanoate + (6R)-5,10-methylene-5,6,7,8-tetrahydrofolate + H2O = 2-dehydropantoate + (6S)-5,6,7,8-tetrahydrofolate. Its pathway is cofactor biosynthesis; (R)-pantothenate biosynthesis; (R)-pantoate from 3-methyl-2-oxobutanoate: step 1/2. Functionally, catalyzes the reversible reaction in which hydroxymethyl group from 5,10-methylenetetrahydrofolate is transferred onto alpha-ketoisovalerate to form ketopantoate. This chain is 3-methyl-2-oxobutanoate hydroxymethyltransferase, found in Bacillus pumilus (strain SAFR-032).